A 670-amino-acid polypeptide reads, in one-letter code: Kinesin-like protein KIF2B (670 aa).

Phosphothreonine; by PLK1 is present on Thr-122. Positions 146–173 (CLQEIEKVQKQREKRRRLQQEIRARRAL) form a coiled coil. At Ser-201 the chain carries Phosphoserine; by PLK1. Residues 210–540 (RICVCVRKRP…LRYANRVKEL (331 aa)) form the Kinesin motor domain. 300–307 (GQTGSGKT) provides a ligand contact to ATP.

This sequence belongs to the TRAFAC class myosin-kinesin ATPase superfamily. Kinesin family. MCAK/KIF2 subfamily. In terms of processing, phosphorylation at Thr-122 by PLK1 is required for activity in the correction of kinetochore-microtubules attachment errors, while phosphorylation at Ser-201 also by PLK1 is required for the kinetochore localization and activity in prometaphase.

It localises to the cytoplasm. The protein localises to the cytoskeleton. Its subcellular location is the microtubule organizing center. The protein resides in the centrosome. It is found in the spindle. It localises to the chromosome. The protein localises to the centromere. Its subcellular location is the kinetochore. Plus end-directed microtubule-dependent motor required for spindle assembly and chromosome movement during mitosis. Has microtubule depolymerization activity. Plays a role in chromosome congression. This is Kinesin-like protein KIF2B (KIF2B) from Macaca fascicularis (Crab-eating macaque).